Reading from the N-terminus, the 2345-residue chain is MDEPSPLAKTLELNQHSRFIIGSVSEDNSEDEISNLVKLDLEEKEGSLSPASVSSDTLSDLGISGLQDGLAFHMRSSMSGLHLVKQGRDRKKIDSQRDFTVASPAEFVTRFGGNKVIEKVLIANNGIAAVKCMRSIRRWSYEMFRNERAIRFVVMVTPEDLKANAEYIKMADHYVPVPGGPNNNNYANVELILDIAKRIPVQAVWAGWGHASENPKLPELLLKNGIAFMGPPSQAMWALGDKIASSIVAQTAGIPTLPWSGSGLRVDWQENDFSKRILNVPQDLYEKGYVKDVDDGLKAAEEVGYPVMIKASEGGGGKGIRKVNNADDFPNLFRQVQAEVPGSPIFVMRLAKQSRHLEVQILADQYGNAISLFGRDCSVQRRHQKIIEEAPAAIATPAVFEHMEQCAVKLAKMVGYVSAGTVEYLYSQDGSFYFLELNPRLQVEHPCTEMVADVNLPAAQLQIAMGIPLFRIKDIRMMYGVSPWGDAPIDFENSAHVPCPRGHVIAARITSENPDEGFKPSSGTVQELNFRSNKNVWGYFSVAAAGGLHEFADSQFGHCFSWGENREEAISNMVVALKELSIRGDFRTTVEYLIKLLETESFQLNRIDTGWLDRLIAEKVQAERPDTMLGVVCGALHVADVSLRNSISNFLHSLERGQVLPAHTLLNTVDVELIYEGIKYVLKVTRQSPNSYVVIMNGSCVEVDVHRLSDGGLLLSYDGSSYTTYMKEEVDRYRITIGNKTCVFEKENDPSVMRSPSAGKLIQYIVEDGGHVFAGQCYAEIEVMKMVMTLTAVESGCIHYVKRPGAALDPGCVIAKMQLDNPSKVQQAELHTGSLPQIQSTALRGEKLHRVFHYVLDNLVNVMNGYCLPDPFFSSRVKDWVERLMKTLRDPSLPLLELQDIMTSVSGRIPLNVEKSIKKEMAQYASNITSVLCQFPSQQIANILDSHAATLNRKSEREVFFMNTQSIVQLVQRYRSGIRGHMKAVVMDLLRQYLRVETQFQNGHYDKCVFALREENKSDMNTVLNYIFSHAQVTKKNLLVTMLIDQLCGRDPTLTDELLNILTELTQLSKTTNAKVALRARQVLIASHLPSYELRHNQVESIFLSAIDMYGHQFCIENLQKLILSETSIFDVLPNFFYHSNQVVRMAALEVYVRRAYIAYELNSVQHRQLKDNTCVVEFQFMLPTSHPNRGNIPTLNRMSFASNLNHYGMTHVASVSDVLLDNAFTPPCQRMGGMVSFRTFEDFVRIFDEIMGCFCDSPPQSPTFPESGHTSLYDEDKVPRDEPIHILNVAIKTDGDIEDDRLAAMFREFTQQNKATLVEHGIRRLTFLVAQKDFRKQVNCEVDQRFHREFPKFFTFRARDKFEEDRIYRHLEPALAFQLELNRMRNFDLTAIPCANHKMHLYLGAAKVEVGTEVTDYRFFVRAIIRHSDLVTKEASFEYLQNEGERLLLEAMDELEVAFNNTNVRTDCNHIFLNFVPTVIMDPSKIEESVRSMVMRYGSRLWKLRVLQAELKINIRLTTTGKAIPIRLFLTNESGYYLDISLYKEVTDSRTAQIMFQAYGDKQGPLHGMLINTPYVTKDLLQSKRFQAQSLGTTYIYDIPEMFRQSLIKLWESMSTQAFLPSPPLPSDILTYTELVLDDQGQLVHMNRLPGGNEIGMVAWKMSLKSPEYPDGRDIIVIGNDITYRIGSFGPQEDLLFLRASELARAEGIPRIYVAANSGARIGLAEEIRHMFHVAWVDPEDPYKGYKYLYLTPQDYKRVSALNSVHCEHVEDEGESRYKITDIIGKEEGLGAENLRGSGMIAGESSLAYDEVITISLVTCRAIGIGAYLVRLGQRTIQVENSHLILTGAGALNKVLGREVYTSNNQLGGIQIMHNNGVTHSTVCDDFEGVFTVLHWLSYMPKSVHSSVPLLNSKDPIDRIIEFVPTKAPYDPRWMLAGRPHPTQKGQWLSGFFDYGSFSEIMQPWAQTVVVGRARLGGIPVGVVAVETRTVELSIPADPANLDSEAKIIQQAGQVWFPDSAFKTYQAIKDFNREGLPLMVFANWRGFSGGMKDMYDQVLKFGAYIVDGLRECSQPVMVYIPPQAELRGGSWVVIDPTINPRHMEMYADRESRGSVLEPEGTVEIKFRKKDLVKTMRRVDPVYIRLAERLGTPELSPTERKELESKLKEREEFLIPIYHQVAVQFADLHDTPGRMQEKGVINDILDWKTSRTFFYWRLRRLLLEDLVKKKIHNANPELTDGQIQAMLRRWFVEVEGTVKAYVWDNNKDLVEWLEKQLTEEDGVRSVIEENIKYISRDYVLKQIRSLVQANPEVAMDSIVHMTQHISPTQRAEVVRILSTMDSPST.

An N-acetylmethionine modification is found at Met-1. Ser-5, Ser-23, Ser-25, Ser-29, Ser-34, Ser-47, Ser-49, and Ser-52 each carry phosphoserine. Position 57 is a phosphothreonine (Thr-57). Ser-77 and Ser-79 each carry phosphoserine. A Phosphoserine; by AMPK modification is found at Ser-79. Positions 116 to 617 (VIEKVLIANN…DTGWLDRLIA (502 aa)) constitute a Biotin carboxylation domain. In terms of domain architecture, ATP-grasp spans 274–465 (SKRILNVPQD…LPAAQLQIAM (192 aa)). 300–357 (AEEVGYPVMIKASEGGGGKGIRKVNNADDFPNLFRQVQAEVPGSPIFVMRLAKQSRHL) serves as a coordination point for ATP. Mg(2+) is bound by residues Glu-423, Glu-436, and Asn-438. Glu-423, Glu-436, and Asn-438 together coordinate Mn(2+). Residue Arg-440 is part of the active site. Thr-609 bears the Phosphothreonine mark. One can recognise a Biotinyl-binding domain in the interval 744–818 (FEKENDPSVM…DPGCVIAKMQ (75 aa)). Lys-785 bears the N6-biotinyllysine mark. Ser-834, Ser-1200, Ser-1215, and Ser-1217 each carry phosphoserine. Thr-1226 is modified (phosphothreonine). Residues Ser-1258, Ser-1262, and Ser-1272 each carry the phosphoserine modification. Lys-1333 carries the N6-acetyllysine modification. One can recognise a CoA carboxyltransferase N-terminal domain in the interval 1575–1913 (PYVTKDLLQS…SVHSSVPLLN (339 aa)). The segment at 1575-2233 (PYVTKDLLQS…EDLVKKKIHN (659 aa)) is carboxyltransferase. CoA is bound by residues Arg-1822, Lys-2126, and Arg-2128. The 317-residue stretch at 1917 to 2233 (PIDRIIEFVP…EDLVKKKIHN (317 aa)) folds into the CoA carboxyltransferase C-terminal domain. Thr-2152 bears the Phosphothreonine mark.

Monomer, homodimer, and homotetramer. Can form filamentous polymers. Interacts in its inactive phosphorylated form with the BRCT domains of BRCA1 which prevents ACACA dephosphorylation and inhibits lipid synthesis. Interacts with MID1IP1; interaction with MID1IP1 promotes oligomerization and increases its activity. The cofactor is Mg(2+). Requires Mn(2+) as cofactor. Biotin is required as a cofactor. Post-translationally, phosphorylation on Ser-1262 is required for interaction with BRCA1. In terms of processing, phosphorylation at Ser-79 by AMPK inactivates enzyme activity. The biotin cofactor is covalently attached to the central biotinyl-binding domain and is required for the catalytic activity.

The protein resides in the cytoplasm. It localises to the cytosol. The enzyme catalyses hydrogencarbonate + acetyl-CoA + ATP = malonyl-CoA + ADP + phosphate + H(+). It functions in the pathway lipid metabolism; malonyl-CoA biosynthesis; malonyl-CoA from acetyl-CoA: step 1/1. With respect to regulation, inhibited by phosphorylation. Citrate promotes oligomerization of the protein into filaments that correspond to the most active form of the carboxylase. Cytosolic enzyme that catalyzes the carboxylation of acetyl-CoA to malonyl-CoA, the first and rate-limiting step of de novo fatty acid biosynthesis. This is a 2 steps reaction starting with the ATP-dependent carboxylation of the biotin carried by the biotin carboxyl carrier (BCC) domain followed by the transfer of the carboxyl group from carboxylated biotin to acetyl-CoA. In Mus musculus (Mouse), this protein is Acetyl-CoA carboxylase 1.